Here is a 476-residue protein sequence, read N- to C-terminus: Cytosolic Fe-S cluster assembly factor narfl (476 aa).

Residues C24, C71, C74, C77, C190, C246, C395, and C399 each coordinate [4Fe-4S] cluster.

The protein belongs to the NARF family. In terms of assembly, component of the CIA complex.

In terms of biological role, component of the cytosolic iron-sulfur protein assembly (CIA) complex, a multiprotein complex that mediates the incorporation of iron-sulfur cluster into extramitochondrial Fe/S proteins. In Xenopus tropicalis (Western clawed frog), this protein is Cytosolic Fe-S cluster assembly factor narfl (narfl).